A 743-amino-acid chain; its full sequence is Acetyl-coenzyme A synthetase, chloroplastic/glyoxysomal (743 aa).

Residues 1–84 constitute a chloroplast transit peptide; the sequence is MKIGSPSSPI…LNAVVLGESL (84 aa). Aspartate 613 is a catalytic residue.

Belongs to the ATP-dependent AMP-binding enzyme family. Expressed in leaves, flower buds and young flowers.

It is found in the plastid. The protein localises to the chloroplast. The protein resides in the glyoxysome. The catalysed reaction is acetate + ATP + CoA = acetyl-CoA + AMP + diphosphate. Catalyzes the production of acetyl-CoA, an activated form of acetate that can be used for lipid synthesis or for energy generation. May play a limited role in the biosynthesis of lipids. The protein is Acetyl-coenzyme A synthetase, chloroplastic/glyoxysomal (ACS) of Arabidopsis thaliana (Mouse-ear cress).